The following is a 333-amino-acid chain: uncharacterized protein (333 aa).

A coiled-coil region spans residues 94 to 122; it reads NLYREVWRELEEEQNKVEKLREYILKLDS.

This is an uncharacterized protein from Aquifex aeolicus (strain VF5).